Reading from the N-terminus, the 566-residue chain is Potassium-transporting ATPase potassium-binding subunit (566 aa).

12 helical membrane-spanning segments follow: residues 6 to 26 (VALL…LGIA), 60 to 80 (AAAI…LMLF), 128 to 148 (LGLT…AFVL), 167 to 187 (IWRI…LFLA), 247 to 267 (LTNF…CICF), 276 to 296 (VGSA…LLIM), 331 to 351 (FGLW…CGAV), 361 to 381 (LGGL…GGVG), 383 to 403 (GWYG…LMIG), 423 to 443 (IGLL…VILP), 492 to 512 (LMFV…GALI), and 530 to 550 (LFVG…FIPA).

It belongs to the KdpA family. In terms of assembly, the system is composed of three essential subunits: KdpA, KdpB and KdpC.

The protein localises to the cell inner membrane. Part of the high-affinity ATP-driven potassium transport (or Kdp) system, which catalyzes the hydrolysis of ATP coupled with the electrogenic transport of potassium into the cytoplasm. This subunit binds the periplasmic potassium ions and delivers the ions to the membrane domain of KdpB through an intramembrane tunnel. This chain is Potassium-transporting ATPase potassium-binding subunit, found in Tolumonas auensis (strain DSM 9187 / NBRC 110442 / TA 4).